Here is a 538-residue protein sequence, read N- to C-terminus: Diacylglycerol O-acyltransferase 1-1 (538 aa).

Disordered stretches follow at residues 1 to 39 and 54 to 106; these read MVGS…GAIV and AAAA…GGGR. The segment covering 69 to 83 has biased composition (low complexity); the sequence is EAASGEPSSSSSSSP. 7 helical membrane-spanning segments follow: residues 136–156, 186–206, 218–238, 245–265, 293–313, 326–346, and 382–402; these read AIFK…LVAV, WPLL…FAVE, VATC…VLVI, VLSG…LVSF, NLQP…TLCY, GWLI…GFII, and LWLC…AEIL. An FYXDWWN motif motif is present at residues 409–415; that stretch reads FYKDWWN. The next 3 helical transmembrane spans lie at 451–471, 474–494, and 505–525; these read VAVL…VAVP, ILKF…VLTA, and VGNM…CLLL. Histidine 464 is an active-site residue.

Belongs to the membrane-bound acyltransferase family. Sterol o-acyltransferase subfamily.

The protein resides in the endoplasmic reticulum membrane. It carries out the reaction an acyl-CoA + a 1,2-diacyl-sn-glycerol = a triacyl-sn-glycerol + CoA. It participates in glycerolipid metabolism; triacylglycerol biosynthesis. Its function is as follows. Involved in triacylglycerol (TAG) synthesis. Catalyzes the acylation of the sn-3 hydroxy group of sn-1,2-diacylglycerol using acyl-CoA. In Oryza sativa subsp. japonica (Rice), this protein is Diacylglycerol O-acyltransferase 1-1.